The primary structure comprises 141 residues: Protein C19orf12 homolog (141 aa).

Residues 37-57 form a helical membrane-spanning segment; the sequence is AVAFVGGLVGGPPGLAVGGAV.

This sequence belongs to the C19orf12 family.

The protein resides in the mitochondrion. It is found in the mitochondrion membrane. Its subcellular location is the endoplasmic reticulum. It localises to the cytoplasm. The protein localises to the cytosol. This is Protein C19orf12 homolog from Bos taurus (Bovine).